The following is a 252-amino-acid chain: Carbonic anhydrase (252 aa).

An N-terminal signal peptide occupies residues Met1–Ala26. In terms of domain architecture, Alpha-carbonic anhydrase spans Thr31–Glu252. Cys54 and Cys207 are disulfide-bonded. His92 serves as the catalytic Proton acceptor. 3 residues coordinate Zn(2+): His118, His120, and His137. Thr203–Thr204 lines the substrate pocket.

Belongs to the alpha-carbonic anhydrase family. Homodimer. Zn(2+) is required as a cofactor.

Its subcellular location is the periplasm. The catalysed reaction is hydrogencarbonate + H(+) = CO2 + H2O. Reversible hydration of carbon dioxide. This is Carbonic anhydrase (cah) from Neisseria gonorrhoeae.